A 482-amino-acid polypeptide reads, in one-letter code: Alanine aminotransferase 2 (482 aa).

Position 299 is an N6-(pyridoxal phosphate)lysine (Lys-299).

Belongs to the class-I pyridoxal-phosphate-dependent aminotransferase family. Alanine aminotransferase subfamily. Homodimer. The cofactor is pyridoxal 5'-phosphate.

The catalysed reaction is L-alanine + 2-oxoglutarate = pyruvate + L-glutamate. It participates in photosynthesis; C4 acid pathway. It functions in the pathway amino-acid degradation; L-alanine degradation via transaminase pathway; pyruvate from L-alanine: step 1/1. Its function is as follows. Transfer of C3 units between the cytosol of mesophyll and bundle sheath cells to maintain a nitrogen-carbon balance in the C4-dicarboxylic pathway. The sequence is that of Alanine aminotransferase 2 from Hordeum vulgare (Barley).